The sequence spans 136 residues: Invertebrate-type lysozyme (136 aa).

The N-terminal stretch at 1 to 11 (METVSVEEGLD) is a signal peptide. One can recognise an I-type lysozyme domain in the interval 14–130 (PGMVSQKCLL…WELLQKIPGC (117 aa)). Cystine bridges form between Cys-21-Cys-98, Cys-24-Cys-130, Cys-26-Cys-33, Cys-38-Cys-47, Cys-60-Cys-80, Cys-70-Cys-76, and Cys-94-Cys-112. Residue Glu-29 is the Proton donor of the active site. Residue Asp-41 is the Nucleophile of the active site. 53-59 (KQPYWID) contributes to the substrate binding site. Asn-75 carries N-linked (GlcNAc...) asparagine glycosylation. Substrate-binding positions include Tyr-84, Tyr-92, 105-107 (HNG), and Lys-119.

In terms of assembly, homodimer in its autoinhibited state. Active as monomer.

It is found in the secreted. It carries out the reaction Hydrolysis of (1-&gt;4)-beta-linkages between N-acetylmuramic acid and N-acetyl-D-glucosamine residues in a peptidoglycan and between N-acetyl-D-glucosamine residues in chitodextrins.. With respect to regulation, chitinase activity is activated by high salt concentrations which cause the release of the monomer from the autoinhibited homodimer. In terms of biological role, bacteriolytic activity against Gram-positive bacterium M.luteus and thereby probably protects against bacterial infection. Also has chitinase activity. May act as an ispopeptidase, cleaving isopeptide bonds between the side chains of Lys and Gln residues in proteins or in the cross-linking peptide of peptidoglycan in bacterial cell walls. This Ruditapes philippinarum (Japanese carpet shell) protein is Invertebrate-type lysozyme.